The sequence spans 315 residues: Histone-lysine N-methyltransferase SETMAR (315 aa).

Residues 74–137 enclose the Pre-SET domain; sequence PGCACIKTPC…HCRNRVVQSG (64 aa). 9 residues coordinate Zn(2+): Cys-76, Cys-78, Cys-83, Cys-88, Cys-90, Cys-119, Cys-123, Cys-125, and Cys-129. In terms of domain architecture, SET spans 140 to 264; it reads FLLQVFQTEK…PGEELSYDYS (125 aa). Residues 150-152, Tyr-193, Arg-221, and 224-225 contribute to the S-adenosyl-L-methionine site; these read KGW and NH. The Zn(2+) site is built by Cys-227, Cys-288, Cys-290, and Cys-295. In terms of domain architecture, Post-SET spans 284-300; sequence PRKPCYCGAQSCATFLP.

The protein belongs to the class V-like SAM-binding methyltransferase superfamily.

It localises to the nucleus. Its subcellular location is the chromosome. It catalyses the reaction L-lysyl(36)-[histone H3] + 2 S-adenosyl-L-methionine = N(6),N(6)-dimethyl-L-lysyl(36)-[histone H3] + 2 S-adenosyl-L-homocysteine + 2 H(+). Its function is as follows. Histone methyltransferase that methylates 'Lys-4' and 'Lys-36' of histone H3, 2 specific tags for epigenetic transcriptional activation. Specifically mediates dimethylation of H3 'Lys-36'. This Rattus norvegicus (Rat) protein is Histone-lysine N-methyltransferase SETMAR.